The following is a 70-amino-acid chain: DNA gyrase inhibitor YacG (70 aa).

Positions 21, 24, 36, and 40 each coordinate Zn(2+).

It belongs to the DNA gyrase inhibitor YacG family. Interacts with GyrB. Zn(2+) is required as a cofactor.

In terms of biological role, inhibits all the catalytic activities of DNA gyrase by preventing its interaction with DNA. Acts by binding directly to the C-terminal domain of GyrB, which probably disrupts DNA binding by the gyrase. The protein is DNA gyrase inhibitor YacG of Sinorhizobium medicae (strain WSM419) (Ensifer medicae).